Reading from the N-terminus, the 1093-residue chain is Non-canonical non-ribosomal peptide synthetase ascB (1093 aa).

Low complexity predominate over residues 1 to 26 (MTVNGHHTNGVNGANGTNGHANGSNG). A disordered region spans residues 1–27 (MTVNGHHTNGVNGANGTNGHANGSNGI). The interval 35–392 (EIVPFVKPQV…LSLTFAPTDN (358 aa)) is adenylation (A) domain. Positions 591-678 (DNLEQNLKSL…EIAAALTKGS (88 aa)) constitute a Carrier domain. At S627 the chain carries O-(pantetheine 4'-phosphoryl)serine. A thioester reductase (TR) domain region spans residues 721-971 (LTGATGSLGS…IPVDDAASTV (251 aa)).

The protein belongs to the NRP synthetase family.

It carries out the reaction ilicicolinate B + AH2 + ATP = ilicicolin B + A + AMP + diphosphate. Its pathway is secondary metabolite biosynthesis; terpenoid biosynthesis. Its function is as follows. Non-canonical non-ribosomal peptide synthetase; part of the asc-1 gene cluster that mediates the biosynthesis of both ascochlorin and ascofuranone, a strong inhibitor of cyanide-insensitive alternative oxidases and a promising drug candidate against African trypanosomiasis. The first step in the pathway is performed by the non-reducing polyketide synthase ascC that produces orsellinic acid by condensing acetyl-CoA with 3 malonyl-CoA units. Orsellinic acid is then prenylated by the prenyltransferase ascA to yield ilicicolinic acid B. Ilicicolinic acid B is further reduced to ilicicolin B by the reductase ascB. The halogenase ascD then chlorinates ilicicolin B to produce ilicicolin A which is converted to ilicicolin A epoxide by the cytochrome P450 monooxygenase ascE that catalyzes stereoselective epoxidation of the terminal double bond of the prenyl group. Ilicicolin A epoxide is the last common precursor for the biosynthesis of ascofuranone and ascochlorin. The terpene cyclase ascF produces a monocyclic terpene, and the cyclization reaction is proposed to be initiated by protonation of the terminal epoxide of ilicicolin A epoxide to generate a monocyclic tertiarycation, which is followed by a series of hydride and methyl shifts with abstraction of proton, leading to the formation of the (14S,15R,19R)-trimethylcyclohexanone ring structure of ilicicolin C, which is finally reduced to ascochlorin by the dehydrogenase ascG. On the other hand, ilicicolin A epoxide is hydroxylated by the cytochrome P450 monooxygenase ascH, and the resultant product is cyclized by the terpene cyclase ascI to ascofuranol via protonation-initiated epoxide ring opening, which facilitates the 6-endo-tet cyclization to form the tetrahy-drofuran ring. Finally, ascofuranol is oxidized into ascofuranone by ascJ. This Acremonium egyptiacum (Oospora egyptiaca) protein is Non-canonical non-ribosomal peptide synthetase ascB.